Consider the following 105-residue polypeptide: Integration host factor subunit alpha (105 aa).

It belongs to the bacterial histone-like protein family. As to quaternary structure, heterodimer of an alpha and a beta chain.

Its function is as follows. This protein is one of the two subunits of integration host factor, a specific DNA-binding protein that functions in genetic recombination as well as in transcriptional and translational control. This is Integration host factor subunit alpha from Rhodospirillum rubrum (strain ATCC 11170 / ATH 1.1.1 / DSM 467 / LMG 4362 / NCIMB 8255 / S1).